The following is a 476-amino-acid chain: Probable serine carboxypeptidase CPVL (476 aa).

A signal peptide spans 1–22 (MVGAMWKVIVSLVLLMPGPCDG). Residues N81 and N132 are each glycosylated (N-linked (GlcNAc...) asparagine). The active site involves S204. N-linked (GlcNAc...) asparagine glycosylation is found at N307 and N346. Residues D388 and H448 contribute to the active site.

This sequence belongs to the peptidase S10 family. In terms of tissue distribution, expressed in macrophages but not in other leukocytes. Abundantly expressed in heart and kidney. Also expressed in spleen, leukocytes, and placenta.

In terms of biological role, may be involved in the digestion of phagocytosed particles in the lysosome, participation in an inflammatory protease cascade, and trimming of peptides for antigen presentation. The polypeptide is Probable serine carboxypeptidase CPVL (CPVL) (Homo sapiens (Human)).